Reading from the N-terminus, the 143-residue chain is Actinoxanthin (143 aa).

A signal peptide spans 1–33 (MSLRHMSRRASRFGVVAVASIGLAAAAQSVAFA). 2 disulfides stabilise this stretch: C69–C78 and C119–C124.

Belongs to the neocarzinostatin family.

Binds non-covalently to a chromophore which is the cytotoxic and mutagenic component of the antibiotic. The chromophore binds to DNA as a weak intercalator and causes single- and double-strand breaks. The chain is Actinoxanthin (axnA) from Streptomyces globisporus.